Reading from the N-terminus, the 380-residue chain is Cytochrome b (380 aa).

The next 4 helical transmembrane spans lie at 34–54 (FGSLLAVCLATQIITGLLLAM), 78–99 (WLIRNLHANGASFFFICIFLHI), 114–134 (WNTGVVLLLTLMATAFVGYVL), and 179–199 (FFALHFLLPFVIAGITIIHLT). Heme b contacts are provided by His-84 and His-98. The heme b site is built by His-183 and His-197. An a ubiquinone-binding site is contributed by His-202. 4 consecutive transmembrane segments (helical) span residues 227–247 (LKDILGLTLMFIPFLTLALFS), 289–309 (LGGVLALAASVLILLLIPFLH), 321–341 (LSQILFWLLVANLLILTWIGS), and 348–368 (FIIIGQMASFSYFSILLILFP).

The protein belongs to the cytochrome b family. As to quaternary structure, the cytochrome bc1 complex contains 11 subunits: 3 respiratory subunits (MT-CYB, CYC1 and UQCRFS1), 2 core proteins (UQCRC1 and UQCRC2) and 6 low-molecular weight proteins (UQCRH/QCR6, UQCRB/QCR7, UQCRQ/QCR8, UQCR10/QCR9, UQCR11/QCR10 and a cleavage product of UQCRFS1). This cytochrome bc1 complex then forms a dimer. It depends on heme b as a cofactor.

It is found in the mitochondrion inner membrane. Its function is as follows. Component of the ubiquinol-cytochrome c reductase complex (complex III or cytochrome b-c1 complex) that is part of the mitochondrial respiratory chain. The b-c1 complex mediates electron transfer from ubiquinol to cytochrome c. Contributes to the generation of a proton gradient across the mitochondrial membrane that is then used for ATP synthesis. The polypeptide is Cytochrome b (MT-CYB) (Pavo muticus (Green peafowl)).